The primary structure comprises 705 residues: Lethal(3)malignant brain tumor-like protein 2 (705 aa).

A disordered region spans residues 1 to 84 (MEKPPSIEET…GTPRSLDGSG (84 aa)). Phosphoserine is present on S13. The segment covering 15-25 (PMEEEEDDDLE) has biased composition (acidic residues). Residues 38–49 (SSVGSESSSYLE) show a composition bias toward low complexity. The span at 50–60 (ESSEAENEDRE) shows a compositional bias: acidic residues. The residue at position 67 (S67) is a Phosphoserine. T76 carries the post-translational modification Phosphothreonine. The segment at 81-116 (DGSGSEPAVCEMCGIVGTREAFFSKTKRFCSVSCSR) adopts an FCS-type zinc-finger fold. Positions 90, 93, 110, and 114 each coordinate Zn(2+). MBT repeat units follow at residues 179-283 (FDWG…LVPP), 291-391 (TDWK…IKMS), 397-500 (MAHH…LTPP), and 508-604 (FNWE…LQPP). The residue at position 338 (S338) is a Phosphoserine. K405 participates in a covalent cross-link: Glycyl lysine isopeptide (Lys-Gly) (interchain with G-Cter in SUMO2). The disordered stretch occupies residues 608–705 (EPATPLKAKE…VENIKQETDD (98 aa)). Over residues 619–634 (TKKKKKQFGKKRKRIP) the composition is skewed to basic residues. Residues K647, K659, and K675 each participate in a glycyl lysine isopeptide (Lys-Gly) (interchain with G-Cter in SUMO2) cross-link. Residues S683, S688, and S689 each carry the phosphoserine modification. K700 participates in a covalent cross-link: Glycyl lysine isopeptide (Lys-Gly) (interchain with G-Cter in SUMO1); alternate. A Glycyl lysine isopeptide (Lys-Gly) (interchain with G-Cter in SUMO2); alternate cross-link involves residue K700.

As to quaternary structure, part of the E2F6.com-1 complex in G0 phase composed of E2F6, MGA, MAX, TFDP1, CBX3, BAT8, EUHMTASE1, RING1, RNF2, MBLR, BAT8 and YAF2.

It localises to the nucleus. Its function is as follows. Putative Polycomb group (PcG) protein. PcG proteins maintain the transcriptionally repressive state of genes, probably via a modification of chromatin, rendering it heritably changed in its expressibility. Its association with a chromatin-remodeling complex suggests that it may contribute to prevent expression of genes that trigger the cell into mitosis. Binds to monomethylated and dimethylated 'Lys-20' on histone H4. Binds histone H3 peptides that are monomethylated or dimethylated on 'Lys-4', 'Lys-9' or 'Lys-27'. The polypeptide is Lethal(3)malignant brain tumor-like protein 2 (L3MBTL2) (Pongo abelii (Sumatran orangutan)).